A 153-amino-acid polypeptide reads, in one-letter code: Ubiquitin-conjugating enzyme E2-18 kDa (153 aa).

Positions 2–149 constitute a UBC core domain; the sequence is AATRRLTREL…AEEFTKKNAE (148 aa). Cys-86 serves as the catalytic Glycyl thioester intermediate.

It belongs to the ubiquitin-conjugating enzyme family.

It carries out the reaction S-ubiquitinyl-[E1 ubiquitin-activating enzyme]-L-cysteine + [E2 ubiquitin-conjugating enzyme]-L-cysteine = [E1 ubiquitin-activating enzyme]-L-cysteine + S-ubiquitinyl-[E2 ubiquitin-conjugating enzyme]-L-cysteine.. The protein operates within protein modification; protein ubiquitination. Functionally, catalyzes the covalent attachment of ubiquitin to other proteins. This Drosophila melanogaster (Fruit fly) protein is Ubiquitin-conjugating enzyme E2-18 kDa (Ubc84D).